A 259-amino-acid chain; its full sequence is MAATGEALTTQGYISHHLHHLQVGSGFWTVNIDSMIFSVILGALFIWIFRKVAATATSGVPGKLQCFVEMVVEFVDDTVKGIFHGKSKLIAPLALTVFIWVFLMNLMDLIPVDYLPYTAQVLGIPYLRVVPSADVNITMSMALGVFALIIIYSIKMKGVSGFVKELTLNPFNHWALIPVNLALELVTLLSKPISLGLRLFGNMYAGELVFILIAGLLPWWSQWLLSVPWALFHILVITLQAFIFMVLTIVYLSMASEDH.

5 consecutive transmembrane segments (helical) span residues 29-49, 90-110, 134-154, 208-228, and 230-250; these read TVNI…IWIF, IAPL…MDLI, DVNI…IYSI, LVFI…LSVP, and ALFH…LTIV.

This sequence belongs to the ATPase A chain family. As to quaternary structure, F-type ATPases have 2 components, CF(1) - the catalytic core - and CF(0) - the membrane proton channel. CF(1) has five subunits: alpha(3), beta(3), gamma(1), delta(1), epsilon(1). CF(0) has three main subunits: a(1), b(2) and c(9-12). The alpha and beta chains form an alternating ring which encloses part of the gamma chain. CF(1) is attached to CF(0) by a central stalk formed by the gamma and epsilon chains, while a peripheral stalk is formed by the delta and b chains.

The protein localises to the cell inner membrane. Functionally, key component of the proton channel; it plays a direct role in the translocation of protons across the membrane. This Aeromonas salmonicida (strain A449) protein is ATP synthase subunit a.